The chain runs to 1210 residues: V-type proton ATPase 116 kDa subunit a 4 (1210 aa).

Topologically, residues 1–715 (MSSFSNVGFV…YTIITFPFLF (715 aa)) are cytoplasmic. The segment covering 259-271 (SSKISFTSSSPSP) has biased composition (low complexity). Residues 259-292 (SSKISFTSSSPSPQRNPKNEAQKNSSSKREETSM) form a disordered region. Over residues 275-291 (PKNEAQKNSSSKREETS) the composition is skewed to basic and acidic residues. Positions 339–405 (FVKQMRRCEE…EREFLDLNNN (67 aa)) form a coiled coil. Residues 716–736 (AVMFGDAAHGAILLLAALFFI) traverse the membrane as a helical segment. Topologically, residues 737 to 760 (RNERKIESKKIRDEIFNTFYGGRY) are extracellular. The chain crosses the membrane as a helical span at residues 761 to 781 (IMMLMGIFSIYTGFLYNDAFA). Residues 782-855 (KSFNVFGSGW…SFLNSMKMKA (74 aa)) lie on the Cytoplasmic side of the membrane. A helical transmembrane segment spans residues 856–876 (SVIIGITQMTFGVFLSVLNHI). Over 877-892 (HFKSYIDIISNFIPQV) the chain is Extracellular. Residues 893 to 913 (IFLSCIFIYLCIQIIVKWIFF) traverse the membrane as a helical segment. At 914–976 (SVNAENVFGF…WYPNQRLVET (63 aa)) the chain is on the cytoplasmic side. Residues 977-997 (ILISISLACIPIMLFGKPLWV) form a helical membrane-spanning segment. Residues 998 to 1127 (RFVTSKRHKL…NETIAMCLKP (130 aa)) lie on the Extracellular side of the membrane. N1010, N1019, and N1118 each carry an N-linked (GlcNAc...) asparagine glycan. A helical transmembrane segment spans residues 1128–1148 (VVACVAFFIFASLSLSILIMM). Residues 1149-1210 (EGLSAFLHAL…DISSGQHLHI (62 aa)) are Cytoplasmic-facing.

This sequence belongs to the V-ATPase 116 kDa subunit family. V-ATPase is a heteromultimeric enzyme made up of two complexes: the ATP-hydrolytic V1 complex and the proton translocation V0 complex. The V1 complex consists of three catalytic AB heterodimers that form a heterohexamer, three peripheral stalks each consisting of EG heterodimers, one central rotor including subunits D and F, and the regulatory subunits C and H. The proton translocation complex V0 consists of the proton transport subunit a, a ring of proteolipid subunits c9c'', rotary subunit d, subunits e and f, and the accessory subunits vah-19/Ac45 and vah-20/PRR. As to expression, expressed in uterus.

It is found in the membrane. Functionally, subunit of the V0 complex of vacuolar(H+)-ATPase (V-ATPase), a multisubunit enzyme composed of a peripheral complex (V1) that hydrolyzes ATP and a membrane integral complex (V0) that translocates protons. V-ATPase is responsible for acidifying and maintaining the pH of intracellular compartments and in some cell types, is targeted to the plasma membrane, where it is responsible for acidifying the extracellular environment. The polypeptide is V-type proton ATPase 116 kDa subunit a 4 (Caenorhabditis elegans).